The primary structure comprises 484 residues: Ribonuclease Y (484 aa).

The chain crosses the membrane as a helical span at residues 18–38; sequence FFAFLFLIIIAFNLCLFAYLY. Positions 166–234 constitute a KH domain; sequence SPSFLISESD…LTVRNILMND (69 aa). The region spanning 293 to 385 is the HD domain; sequence VLSHSLETAF…TQIADKLSAA (93 aa).

The protein belongs to the RNase Y family.

It is found in the cell membrane. Its function is as follows. Endoribonuclease that initiates mRNA decay. The polypeptide is Ribonuclease Y (Mycoplasma genitalium (strain ATCC 33530 / DSM 19775 / NCTC 10195 / G37) (Mycoplasmoides genitalium)).